We begin with the raw amino-acid sequence, 136 residues long: Ribulose bisphosphate carboxylase small subunit, chloroplastic 1 (136 aa).

The transit peptide at 1–13 (NTDITSNGERVKC) directs the protein to the chloroplast.

Belongs to the RuBisCO small chain family. In terms of assembly, heterohexadecamer of 8 large and 8 small subunits.

It is found in the plastid. The protein resides in the chloroplast. In terms of biological role, ruBisCO catalyzes two reactions: the carboxylation of D-ribulose 1,5-bisphosphate, the primary event in carbon dioxide fixation, as well as the oxidative fragmentation of the pentose substrate. Both reactions occur simultaneously and in competition at the same active site. Although the small subunit is not catalytic it is essential for maximal activity. In Pisum sativum (Garden pea), this protein is Ribulose bisphosphate carboxylase small subunit, chloroplastic 1.